A 158-amino-acid polypeptide reads, in one-letter code: Endoribonuclease YbeY (158 aa).

The Zn(2+) site is built by His119, His123, and His129.

This sequence belongs to the endoribonuclease YbeY family. It depends on Zn(2+) as a cofactor.

Its subcellular location is the cytoplasm. Single strand-specific metallo-endoribonuclease involved in late-stage 70S ribosome quality control and in maturation of the 3' terminus of the 16S rRNA. This is Endoribonuclease YbeY from Shewanella woodyi (strain ATCC 51908 / MS32).